We begin with the raw amino-acid sequence, 330 residues long: Glycerol-3-phosphate dehydrogenase [NAD(P)+] (330 aa).

The NADPH site is built by serine 10, tryptophan 11, arginine 31, and lysine 105. Residues lysine 105, glycine 135, and serine 137 each contribute to the sn-glycerol 3-phosphate site. Alanine 139 lines the NADPH pocket. 5 residues coordinate sn-glycerol 3-phosphate: lysine 190, aspartate 243, serine 253, arginine 254, and asparagine 255. Residue lysine 190 is the Proton acceptor of the active site. Residue arginine 254 participates in NADPH binding. NADPH is bound by residues valine 278 and glutamate 280.

Belongs to the NAD-dependent glycerol-3-phosphate dehydrogenase family.

The protein resides in the cytoplasm. It catalyses the reaction sn-glycerol 3-phosphate + NAD(+) = dihydroxyacetone phosphate + NADH + H(+). The catalysed reaction is sn-glycerol 3-phosphate + NADP(+) = dihydroxyacetone phosphate + NADPH + H(+). It participates in membrane lipid metabolism; glycerophospholipid metabolism. Functionally, catalyzes the reduction of the glycolytic intermediate dihydroxyacetone phosphate (DHAP) to sn-glycerol 3-phosphate (G3P), the key precursor for phospholipid synthesis. The chain is Glycerol-3-phosphate dehydrogenase [NAD(P)+] from Solidesulfovibrio magneticus (strain ATCC 700980 / DSM 13731 / RS-1) (Desulfovibrio magneticus).